Reading from the N-terminus, the 182-residue chain is Orotate phosphoribosyltransferase (182 aa).

5-phospho-alpha-D-ribose 1-diphosphate-binding positions include arginine 91, lysine 92, lysine 95, histidine 97, and 117-125 (EDVTTTGGS). Orotate-binding residues include threonine 121 and arginine 149.

Belongs to the purine/pyrimidine phosphoribosyltransferase family. PyrE subfamily. In terms of assembly, homodimer. The cofactor is Mg(2+).

The enzyme catalyses orotidine 5'-phosphate + diphosphate = orotate + 5-phospho-alpha-D-ribose 1-diphosphate. The protein operates within pyrimidine metabolism; UMP biosynthesis via de novo pathway; UMP from orotate: step 1/2. Its function is as follows. Catalyzes the transfer of a ribosyl phosphate group from 5-phosphoribose 1-diphosphate to orotate, leading to the formation of orotidine monophosphate (OMP). The chain is Orotate phosphoribosyltransferase from Pyrococcus abyssi (strain GE5 / Orsay).